A 155-amino-acid chain; its full sequence is Gas vesicle protein K (155 aa).

Belongs to the gas vesicle GvpK family.

The protein resides in the gas vesicle. Functionally, might be involved in nucleating gas vesicle formation. Gas vesicles (GV) are hollow, gas filled proteinaceous nanostructures. During planktonic growth they allow positioning of the organism at a favorable depth for light or nutrient acquisition. In terms of biological role, cluster expression in E.coli (gvpA1-gvpA2-gvpC-gvpN-gvpJ-gvpK-gvpF-gvpG-gvpV-gvpW) allows cells to float and produces irregularly shaped gas vesicles. The sequence is that of Gas vesicle protein K from Nostoc sp. (strain PCC 7120 / SAG 25.82 / UTEX 2576).